Reading from the N-terminus, the 404-residue chain is Argininosuccinate synthase (404 aa).

9–17 contacts ATP; it reads AYSGGLDTS. L-citrulline is bound at residue Y86. G116 lines the ATP pocket. 3 residues coordinate L-aspartate: T118, N122, and D123. N122 lines the L-citrulline pocket. The L-citrulline site is built by R126, S174, S183, E259, and Y271.

Belongs to the argininosuccinate synthase family. Type 1 subfamily. Homotetramer.

Its subcellular location is the cytoplasm. It catalyses the reaction L-citrulline + L-aspartate + ATP = 2-(N(omega)-L-arginino)succinate + AMP + diphosphate + H(+). Its pathway is amino-acid biosynthesis; L-arginine biosynthesis; L-arginine from L-ornithine and carbamoyl phosphate: step 2/3. The protein is Argininosuccinate synthase of Listeria monocytogenes serotype 4b (strain CLIP80459).